The sequence spans 1040 residues: Kinesin-like protein KIN-14H (1040 aa).

The Calponin-homology (CH) domain occupies 54-176 (DLRRYEAARW…CVLALKSYRE (123 aa)). The disordered stretch occupies residues 208–242 (SEVPVDAVTNSPSSTPSSEQPLLDQSDSNTKNDGT). The segment covering 215–242 (VTNSPSSTPSSEQPLLDQSDSNTKNDGT) has biased composition (polar residues). Positions 434–754 (SIRVYCRVRP…LKFAERVATV (321 aa)) constitute a Kinesin motor domain. Residue 517–524 (GQTGSGKT) participates in ATP binding. Residues 761–796 (VNKDTSEVKELKEQIASLKLALARKESGADQTQLQR) are a coiled coil. Residues 809-818 (LGVSSSFSKS) show a composition bias toward low complexity. Disordered stretches follow at residues 809 to 871 (LGVS…GKEE), 887 to 926 (EDEI…KCNS), and 969 to 1040 (MPRP…QNPK). A compositionally biased stretch (polar residues) spans 840–851 (IEGQSDSASSLD). Residues 887–923 (EDEITRSSKPENRAHTQLEKRTSSLKREATRGVDKNK) are compositionally biased toward basic and acidic residues. Residues 1018 to 1031 (SPGQTSSRHNNSTV) are compositionally biased toward polar residues.

The protein belongs to the TRAFAC class myosin-kinesin ATPase superfamily. Kinesin family. KIN-14 subfamily.

This chain is Kinesin-like protein KIN-14H, found in Arabidopsis thaliana (Mouse-ear cress).